Reading from the N-terminus, the 152-residue chain is Transcriptional regulator MraZ (152 aa).

SpoVT-AbrB domains follow at residues valine 5 to glutamate 52 and alanine 81 to leucine 124.

Belongs to the MraZ family. Forms oligomers.

The protein resides in the cytoplasm. Its subcellular location is the nucleoid. In Halorhodospira halophila (strain DSM 244 / SL1) (Ectothiorhodospira halophila (strain DSM 244 / SL1)), this protein is Transcriptional regulator MraZ.